Consider the following 382-residue polypeptide: Mannan endo-1,4-beta-mannosidase (382 aa).

The signal sequence occupies residues 1–19 (MVKLFSFLLLVWVASPAFS). Substrate is bound by residues W83, N144, 147-151 (WDESK), and N180. E181 functions as the Proton donor/acceptor in the catalytic mechanism. Positions 187, 204, 208, 243, 282, and 284 each coordinate substrate. C195 and C262 are disulfide-bonded. E312 acts as the Nucleophile in catalysis. A disulfide bond links C317 and C349. Residues W341 and D348 each contribute to the substrate site. An involved in stabilization of the transition state region spans residues 346 to 350 (GGDCS).

The protein belongs to the glycosyl hydrolase 5 (cellulase A) family. As to quaternary structure, monomer.

It localises to the secreted. It catalyses the reaction Random hydrolysis of (1-&gt;4)-beta-D-mannosidic linkages in mannans, galactomannans and glucomannans.. Activated particularly by Ca(2+) and Zn(2+), and to a lesser extent by Na(+), K(+), Mg(2+) and Cu(2+). Activation effect of the divalent metal ions Ca(2+), Zn(2+), Mg(2+) and Cu(2+) is reduced significantly by the addition of EDTA. Strongly inhibited by Mn(2+), Hg(2+) and Ag(+). Functionally, hydrolyzes 1,4-beta linked polysaccharide backbones of mannans. Has high activity toward locust bean gum. Also active toward konjac and beta-1,4-mannan. Hydrolyzes mannotetraose (M4) and mannopentaose (M5) to mannobiose (M2) and mannotriose (M3) with a little production of mannose (M1). Hydrolyzes beta-1,4-mannan to M2, M3 and M4. Hardly hydrolyzes M2 and M3. Does not hydrolyze p-nitrophenyl-beta-D-mannopyranoside, gua-gum, carboxymethyl cellulose, soluble starch or laminarin. This is Mannan endo-1,4-beta-mannosidase from Cryptopygus antarcticus (Antarctic springtail).